The sequence spans 326 residues: Palmitoyltransferase ERF2 (326 aa).

Residues 1–62 (MKGNPSTHEV…RLRAVKTARP (62 aa)) are Cytoplasmic-facing. The chain crosses the membrane as a helical span at residues 63–83 (FSLVVLFLILSPMVLFSVFEA). Topologically, residues 84 to 90 (HRLWHTR) are lumenal. Residues 91-111 (YGYKALVVLFYYAWAWSLLSF) traverse the membrane as a helical segment. Residues 112-202 (TKTATSDPGV…NCVGQRNYRY (91 aa)) are Cytoplasmic-facing. The DHHC domain occupies 158–208 (KYCHTCKIWRPPRASHCSVCECCVLTHDHHCIWVNNCVGQRNYRYFLAFLL). Cys-188 functions as the S-palmitoyl cysteine intermediate in the catalytic mechanism. The chain crosses the membrane as a helical span at residues 203 to 223 (FLAFLLSSTLACALLIANCAL). Over 224–241 (HLHRALHEGIRVSHRPLP) the chain is Lumenal. Residues 242-262 (VAVLLCVYAAVLCVYPVILLG) traverse the membrane as a helical segment. Residues 263–326 (YHVAMSGTQQ…GPRSCNYRYR (64 aa)) are Cytoplasmic-facing.

Belongs to the DHHC palmitoyltransferase family. ERF2/ZDHHC9 subfamily. Interacts with ERF4. In terms of processing, autopalmitoylated.

It is found in the endoplasmic reticulum membrane. It carries out the reaction L-cysteinyl-[protein] + hexadecanoyl-CoA = S-hexadecanoyl-L-cysteinyl-[protein] + CoA. Its function is as follows. The ERF2-ERF4 complex is a palmitoyltransferase specific for Ras proteins. In Candida glabrata (strain ATCC 2001 / BCRC 20586 / JCM 3761 / NBRC 0622 / NRRL Y-65 / CBS 138) (Yeast), this protein is Palmitoyltransferase ERF2 (ERF2).